Consider the following 253-residue polypeptide: Small ribosomal subunit protein eS4 (253 aa).

Residues 43-114 (LPLLLIVRNV…YPVKFFKLHP (72 aa)) enclose the S4 RNA-binding domain.

The protein belongs to the eukaryotic ribosomal protein eS4 family.

This chain is Small ribosomal subunit protein eS4 (rps4e), found in Aeropyrum pernix (strain ATCC 700893 / DSM 11879 / JCM 9820 / NBRC 100138 / K1).